The primary structure comprises 156 residues: 6,7-dimethyl-8-ribityllumazine synthase (156 aa).

Residues Phe25, 59–61 (AWE), and 83–85 (AVI) contribute to the 5-amino-6-(D-ribitylamino)uracil site. (2S)-2-hydroxy-3-oxobutyl phosphate is bound at residue 88–89 (ST). His91 acts as the Proton donor in catalysis. Asn116 serves as a coordination point for 5-amino-6-(D-ribitylamino)uracil. Arg130 provides a ligand contact to (2S)-2-hydroxy-3-oxobutyl phosphate.

The protein belongs to the DMRL synthase family. In terms of assembly, forms an icosahedral capsid composed of 60 subunits, arranged as a dodecamer of pentamers.

It carries out the reaction (2S)-2-hydroxy-3-oxobutyl phosphate + 5-amino-6-(D-ribitylamino)uracil = 6,7-dimethyl-8-(1-D-ribityl)lumazine + phosphate + 2 H2O + H(+). The protein operates within cofactor biosynthesis; riboflavin biosynthesis; riboflavin from 2-hydroxy-3-oxobutyl phosphate and 5-amino-6-(D-ribitylamino)uracil: step 1/2. Catalyzes the formation of 6,7-dimethyl-8-ribityllumazine by condensation of 5-amino-6-(D-ribitylamino)uracil with 3,4-dihydroxy-2-butanone 4-phosphate. This is the penultimate step in the biosynthesis of riboflavin. This Acinetobacter baylyi (strain ATCC 33305 / BD413 / ADP1) protein is 6,7-dimethyl-8-ribityllumazine synthase.